A 348-amino-acid chain; its full sequence is RNA 3'-terminal phosphate cyclase (348 aa).

ATP is bound by residues glutamine 107 and 290–294 (HLADQ). The Tele-AMP-histidine intermediate role is filled by histidine 316.

Belongs to the RNA 3'-terminal cyclase family. Type 1 subfamily.

The protein localises to the cytoplasm. The enzyme catalyses a 3'-end 3'-phospho-ribonucleotide-RNA + ATP = a 3'-end 2',3'-cyclophospho-ribonucleotide-RNA + AMP + diphosphate. Catalyzes the conversion of 3'-phosphate to a 2',3'-cyclic phosphodiester at the end of RNA. The mechanism of action of the enzyme occurs in 3 steps: (A) adenylation of the enzyme by ATP; (B) transfer of adenylate to an RNA-N3'P to produce RNA-N3'PP5'A; (C) and attack of the adjacent 2'-hydroxyl on the 3'-phosphorus in the diester linkage to produce the cyclic end product. The biological role of this enzyme is unknown but it is likely to function in some aspects of cellular RNA processing. This Nostoc sp. (strain PCC 7120 / SAG 25.82 / UTEX 2576) protein is RNA 3'-terminal phosphate cyclase (rtcA).